We begin with the raw amino-acid sequence, 164 residues long: uncharacterized protein (164 aa).

A compositionally biased stretch (polar residues) spans 1-29 (MLCVRSSSSNLESDTYLSRYSTRASAGTG). A disordered region spans residues 1–62 (MLCVRSSSSN…SKPSNNKNID (62 aa)). Low complexity predominate over residues 43 to 62 (SSDSSSSSSESKPSNNKNID).

This is an uncharacterized protein from Schizosaccharomyces pombe (strain 972 / ATCC 24843) (Fission yeast).